We begin with the raw amino-acid sequence, 67 residues long: Small ribosomal subunit protein bS21 (67 aa).

The protein belongs to the bacterial ribosomal protein bS21 family.

The chain is Small ribosomal subunit protein bS21 (rpsU) from Aquifex aeolicus (strain VF5).